The chain runs to 180 residues: Cytokinin-beta-glucosidase 1 (180 aa).

Functionally, hydrolyzes cytokinin glucosides thus liberating free cytokinins. This Linaria vulgaris (Toadflax) protein is Cytokinin-beta-glucosidase 1 (ROLC1).